We begin with the raw amino-acid sequence, 364 residues long: UDP-N-acetylglucosamine--N-acetylmuramyl-(pentapeptide) pyrophosphoryl-undecaprenol N-acetylglucosamine transferase (364 aa).

UDP-N-acetyl-alpha-D-glucosamine-binding positions include 14–16 (TGG), Asn-126, Arg-163, Ser-190, Ile-246, 265–270 (ALTVSE), and Gln-291.

Belongs to the glycosyltransferase 28 family. MurG subfamily.

It is found in the cell inner membrane. The enzyme catalyses di-trans,octa-cis-undecaprenyl diphospho-N-acetyl-alpha-D-muramoyl-L-alanyl-D-glutamyl-meso-2,6-diaminopimeloyl-D-alanyl-D-alanine + UDP-N-acetyl-alpha-D-glucosamine = di-trans,octa-cis-undecaprenyl diphospho-[N-acetyl-alpha-D-glucosaminyl-(1-&gt;4)]-N-acetyl-alpha-D-muramoyl-L-alanyl-D-glutamyl-meso-2,6-diaminopimeloyl-D-alanyl-D-alanine + UDP + H(+). Its pathway is cell wall biogenesis; peptidoglycan biosynthesis. Its function is as follows. Cell wall formation. Catalyzes the transfer of a GlcNAc subunit on undecaprenyl-pyrophosphoryl-MurNAc-pentapeptide (lipid intermediate I) to form undecaprenyl-pyrophosphoryl-MurNAc-(pentapeptide)GlcNAc (lipid intermediate II). The chain is UDP-N-acetylglucosamine--N-acetylmuramyl-(pentapeptide) pyrophosphoryl-undecaprenol N-acetylglucosamine transferase from Shewanella loihica (strain ATCC BAA-1088 / PV-4).